The sequence spans 340 residues: Phospho-N-acetylmuramoyl-pentapeptide-transferase (340 aa).

9 helical membrane-spanning segments follow: residues 24 to 44 (VPFGLSVLGSALLGSLLLPVL), 69 to 89 (TMGGLSFLPVGLLVAGIGSGW), 95 to 115 (AVALLTLAYTVVGWLDDWLVI), 129 to 149 (LLLQVGIGLVFCGYLAWQGIP), 156 to 176 (GIGALPLGWLFWPLALFVLVG), 196 to 216 (ALVLAGLGLTAADPVLALVAF), 235 to 255 (LFMGDTGSLGLGGALAGLALL), 260 to 280 (WALAWMGAVLVAEALSVILQV), and 316 to 336 (VVGCFYGLTALLVGLGWAWWH).

It belongs to the glycosyltransferase 4 family. MraY subfamily. The cofactor is Mg(2+).

The protein localises to the cell inner membrane. It catalyses the reaction UDP-N-acetyl-alpha-D-muramoyl-L-alanyl-gamma-D-glutamyl-meso-2,6-diaminopimeloyl-D-alanyl-D-alanine + di-trans,octa-cis-undecaprenyl phosphate = di-trans,octa-cis-undecaprenyl diphospho-N-acetyl-alpha-D-muramoyl-L-alanyl-D-glutamyl-meso-2,6-diaminopimeloyl-D-alanyl-D-alanine + UMP. It functions in the pathway cell wall biogenesis; peptidoglycan biosynthesis. In terms of biological role, catalyzes the initial step of the lipid cycle reactions in the biosynthesis of the cell wall peptidoglycan: transfers peptidoglycan precursor phospho-MurNAc-pentapeptide from UDP-MurNAc-pentapeptide onto the lipid carrier undecaprenyl phosphate, yielding undecaprenyl-pyrophosphoryl-MurNAc-pentapeptide, known as lipid I. The polypeptide is Phospho-N-acetylmuramoyl-pentapeptide-transferase (Synechococcus sp. (strain JA-3-3Ab) (Cyanobacteria bacterium Yellowstone A-Prime)).